The sequence spans 681 residues: Sodium-dependent phosphate transporter 1 (681 aa).

6 helical membrane passes run 25 to 45, 66 to 86, 106 to 126, 162 to 182, 201 to 221, and 234 to 254; these read NLWMLILGFIIAFVLAFSVGA, ACILASIFETVGSALLGAKVS, LMAGSVSAMFGSAVWQLVASF, IVMSWFVSPLLSGIMSGILFF, ALPIFYACTIGINLFSIMYTG, and GTILISVGCAVFCALIVWFFV. The tract at residues 266–295 is disordered; sequence VKSSPSESPLMEKKSNLKEDHEETKMAPGD. S269 and S273 each carry phosphoserine. The segment covering 275-295 has biased composition (basic and acidic residues); the sequence is LMEKKSNLKEDHEETKMAPGD. A helical transmembrane segment spans residues 514 to 534; the sequence is VSLLFQFLQILTACFGSFAHG. The interval 553–560 is a; that stretch reads KQEASTKA. 3 helical membrane passes run 561–581, 602–622, and 652–672; these read ATPIWLLLYGGVGICMGLWVW, FSIELASALTVVIASNIGLPI, and IFMAWFVTVPISGVISAAIMA.

Belongs to the inorganic phosphate transporter (PiT) (TC 2.A.20) family. As to expression, ubiquitously expressed.

It is found in the cell membrane. The catalysed reaction is 2 Na(+)(out) + phosphate(out) = 2 Na(+)(in) + phosphate(in). Its function is as follows. Sodium-phosphate symporter which preferentially transports the monovalent form of phosphate with a stoichiometry of two sodium ions per phosphate ion. May play a role in extracellular matrix and cartilage calcification as well as in vascular calcification. Essential for cell proliferation but this function is independent of its phosphate transporter activity. In terms of biological role, (Microbial infection) May function as a retroviral receptor but do not confer infection susceptibility to Gibbon Ape Leukemia Virus (GaLV), Simian sarcoma-associated virus (SSAV) and Feline leukemia virus subgroup B (FeLV-B). The chain is Sodium-dependent phosphate transporter 1 (Slc20a1) from Mus musculus (Mouse).